The chain runs to 205 residues: Probable GTP-binding protein EngB (205 aa).

The region spanning 22-196 (NLPEVAFVGR…LKVLDEFIHK (175 aa)) is the EngB-type G domain. GTP contacts are provided by residues 30–37 (GRSNVGKS), 57–61 (GRTQL), 76–79 (DLPG), 143–146 (TKVD), and 175–177 (FSA). Positions 37 and 59 each coordinate Mg(2+).

The protein belongs to the TRAFAC class TrmE-Era-EngA-EngB-Septin-like GTPase superfamily. EngB GTPase family. Mg(2+) is required as a cofactor.

Functionally, necessary for normal cell division and for the maintenance of normal septation. This Desulforamulus reducens (strain ATCC BAA-1160 / DSM 100696 / MI-1) (Desulfotomaculum reducens) protein is Probable GTP-binding protein EngB.